Here is a 400-residue protein sequence, read N- to C-terminus: CinA-like protein (400 aa).

Belongs to the CinA family.

In Escherichia coli (strain SE11), this protein is CinA-like protein.